Consider the following 376-residue polypeptide: Thymidine kinase (376 aa).

The disordered stretch occupies residues 1–47 (MASHAGQQHAPAFGQAARASGPTDGRAASRPSHRQGASEARGDPELP). 56-63 (GPHGVGKT) lines the ATP pocket. Glu84 serves as the catalytic Proton acceptor. The substrate site is built by Tyr102 and Gln126. An ATP-binding site is contributed by Arg217. Arg223 is a binding site for substrate.

This sequence belongs to the herpesviridae thymidine kinase family. In terms of assembly, homodimer.

The enzyme catalyses thymidine + ATP = dTMP + ADP + H(+). In terms of biological role, catalyzes the transfer of the gamma-phospho group of ATP to thymidine to generate dTMP in the salvage pathway of pyrimidine synthesis. The dTMP serves as a substrate for DNA polymerase during viral DNA replication. Allows the virus to be reactivated and to grow in non-proliferative cells lacking a high concentration of phosphorylated nucleic acid precursors. The polypeptide is Thymidine kinase (Human herpesvirus 2 (strain 333) (HHV-2)).